A 334-amino-acid polypeptide reads, in one-letter code: Cobalt-precorrin-5B C(1)-methyltransferase (334 aa).

The protein belongs to the CbiD family.

It carries out the reaction Co-precorrin-5B + S-adenosyl-L-methionine = Co-precorrin-6A + S-adenosyl-L-homocysteine. The protein operates within cofactor biosynthesis; adenosylcobalamin biosynthesis; cob(II)yrinate a,c-diamide from sirohydrochlorin (anaerobic route): step 6/10. Functionally, catalyzes the methylation of C-1 in cobalt-precorrin-5B to form cobalt-precorrin-6A. This is Cobalt-precorrin-5B C(1)-methyltransferase from Methanoregula boonei (strain DSM 21154 / JCM 14090 / 6A8).